A 31-amino-acid polypeptide reads, in one-letter code: MTITSTQVYIALLTALIPAFFALKLGKELSK.

A helical membrane pass occupies residues 7–26; it reads QVYIALLTALIPAFFALKLG.

Belongs to the PsaM family.

The protein resides in the plastid. The protein localises to the chloroplast thylakoid membrane. The chain is Photosystem I reaction center subunit XII from Euglena viridis (Cercaria viridis).